The sequence spans 643 residues: E3 ubiquitin-protein ligase Praja-1 (643 aa).

A disordered region spans residues 1–363 (MGQESSKPVW…SDDYYKYCDE (363 aa)). Composition is skewed to basic and acidic residues over residues 95 to 105 (DYSRYPPREYR), 145 to 158 (KFKDDKLYDPEKGA), and 173 to 183 (RDVREERDKLD). The segment covering 200–209 (QSSVASQSSS) has biased composition (low complexity). The span at 213–227 (LATKGDSSERERREQ) shows a compositional bias: basic and acidic residues. Phosphoserine is present on Ser-265. Residue Thr-277 is modified to Phosphothreonine. Basic and acidic residues-rich tracts occupy residues 289–310 (RWRDTANDNEGHSDGLARRGRG) and 320–362 (KYPE…KYCD). Phosphoserine is present on residues Ser-365 and Ser-367. A disordered region spans residues 380 to 454 (RSREQTLSSS…REPSLQEEQA (75 aa)). Low complexity predominate over residues 410 to 439 (SASTGTSPGPGASASAGAGAGASAGSNGSN). The RING-type zinc-finger motif lies at 595–636 (CPICCSEYVKGEVATELPCHHYFHKPCVSIWLQKSGTCPVCR).

As to quaternary structure, binds ubiquitin-conjugating enzymes (E2s). In vitro, interacts with the ubiquitin-conjugating enzyme, UBE2D2. Post-translationally, substrate for E2-dependent ubiquitination. As to expression, expressed in various regions of the brain including the cerebellum, cerebral cortex, medulla, occipital pole, frontal lobe, temporal lobe and putamen. Highest levels in the cerebral cortex.

The catalysed reaction is S-ubiquitinyl-[E2 ubiquitin-conjugating enzyme]-L-cysteine + [acceptor protein]-L-lysine = [E2 ubiquitin-conjugating enzyme]-L-cysteine + N(6)-ubiquitinyl-[acceptor protein]-L-lysine.. Has E2-dependent E3 ubiquitin-protein ligase activity. Ubiquitinates MAGED1 antigen leading to its subsequent degradation by proteasome. May be involved in protein sorting. The chain is E3 ubiquitin-protein ligase Praja-1 (PJA1) from Homo sapiens (Human).